Consider the following 275-residue polypeptide: MPRWEEKNLIEEGKKLGYQVATIYSKDFVLFSNDFTIDNDTDLFIQRNVSHNRALITSFLVEQVGYPVINDHTTLIRCENKIFTTYILARHNIPTPKTFIAFDKTNAIEYSKKLGYPVVIKPVEGSWGRMVAKADNLDVLYSYLEYQEFSTQKYKDIYYIQEFVNKPNRDIRIFVIGDETPVGIYRVNENNWRTNTALGAKAYPLKIDEELRELALKVKDIIGGFFLGIDIFEDKDRGYLVDEVNGVPEYKNTVRVNNFNVSKFLLEKAAEWVKK.

Residues K81, K121, 125–131, 161–172, R186, and N195 each bind ATP; these read GSWGRMV and QEFVNKPNRDIR. An ATP-grasp domain is found at 85 to 270; the sequence is TYILARHNIP…VSKFLLEKAA (186 aa). Mg(2+)-binding residues include D230, E243, and N245. Positions 252 to 253 match the N-[TS] motif that is essential for LysX substrate specificity motif; it reads NT.

This sequence belongs to the RimK family. LysX subfamily. As to quaternary structure, homodimer. Mg(2+) is required as a cofactor.

The catalysed reaction is [amino-group carrier protein]-C-terminal-L-glutamate + L-2-aminoadipate + ATP = [amino-group carrier protein]-C-terminal-N-(1,4-dicarboxybutan-1-yl)-L-glutamine + ADP + phosphate + H(+). It participates in amino-acid biosynthesis; L-lysine biosynthesis via AAA pathway; L-lysine from L-alpha-aminoadipate (Thermus route): step 1/5. Functionally, catalyzes the ATP-dependent formation of a covalent bond between the amino group of alpha-aminoadipate (AAA) and the gamma-carboxyl group of the C-terminal glutamate residue in LysW. The polypeptide is Alpha-aminoadipate--LysW ligase LysX (lysX) (Saccharolobus solfataricus (strain ATCC 35092 / DSM 1617 / JCM 11322 / P2) (Sulfolobus solfataricus)).